The chain runs to 220 residues: MASKFQNRLVGTIVLVALGVIVLPGLLDGQKKHYQDEFAAIPLVPKAGDRDEPDMMPAATQALPTQPPEGAAEEVRAGDAAAPSLDPATIAANNTEFEPEPAPVAPPKPKPVEPPKPKVEAPPAPKPEPKPVVEEKAAPTGKAYVVQLGALKNADKVNEIVGKLRGAGYRVYTSPSTPVQGKITRILVGPDASKDKLKGSLGELKQLSGLSGVVMGYTPN.

Residues 9-29 (LVGTIVLVALGVIVLPGLLDG) traverse the membrane as a helical segment. Disordered stretches follow at residues 46-84 (KAGDRDEPDMMPAATQALPTQPPEGAAEEVRAGDAAAPS) and 97-137 (FEPE…EEKA). Positions 57 to 70 (PAATQALPTQPPEG) are enriched in low complexity. Pro residues predominate over residues 100–109 (EPAPVAPPKP). Basic and acidic residues-rich tracts occupy residues 110–119 (KPVEPPKPKV) and 127–137 (PEPKPVVEEKA). In terms of domain architecture, SPOR spans 138–217 (APTGKAYVVQ…SGLSGVVMGY (80 aa)).

It belongs to the DedD family.

The protein resides in the cell inner membrane. In terms of biological role, non-essential cell division protein that could be required for efficient cell constriction. This Escherichia coli (strain K12) protein is Cell division protein DedD.